We begin with the raw amino-acid sequence, 369 residues long: uncharacterized protein (369 aa).

Residue Lys184 is modified to N6-(pyridoxal phosphate)lysine.

It belongs to the class-V pyridoxal-phosphate-dependent aminotransferase family. The cofactor is pyridoxal 5'-phosphate.

This is an uncharacterized protein from Helicobacter pylori (strain ATCC 700392 / 26695) (Campylobacter pylori).